Here is a 706-residue protein sequence, read N- to C-terminus: Glycogen [starch] synthase (706 aa).

Arginine 26 provides a ligand contact to UDP. 2 residues coordinate UDP-alpha-D-glucose: histidine 191 and arginine 197. Positions 277, 278, 280, 283, and 287 each coordinate alpha-D-glucose 6-phosphate. Arginine 317 is a UDP binding site. Arginine 317 is a binding site for UDP-alpha-D-glucose. Histidine 491 serves as a coordination point for alpha-D-glucose 6-phosphate. UDP-alpha-D-glucose is bound by residues glutamate 500, tryptophan 502, and glycine 503. Threonine 505 lines the UDP pocket. Alpha-D-glucose 6-phosphate contacts are provided by arginine 572 and arginine 576. The interval 670-706 is disordered; that stretch reads PEEEDPEEYPFPLTLKQRTGPGSPLDSIQGLQLNGTR.

The protein belongs to the glycosyltransferase 3 family. As to quaternary structure, interacts with glucogenin gnn; the interaction is direct.

It carries out the reaction [(1-&gt;4)-alpha-D-glucosyl](n) + UDP-alpha-D-glucose = [(1-&gt;4)-alpha-D-glucosyl](n+1) + UDP + H(+). The protein operates within glycan biosynthesis; glycogen biosynthesis. Its activity is regulated as follows. Allosteric activation by glucose-6-phosphate, and phosphorylation by a cAMP-dependent kinase. Glycogen synthase participates in the glycogen biosynthetic process along with glycogenin and glycogen branching enzyme. Extends the primer composed of a few glucose units formed by glycogenin by adding new glucose units to it. In this context, glycogen synthase transfers the glycosyl residue from UDP-Glc to the non-reducing end of alpha-1,4-glucan. The polypeptide is Glycogen [starch] synthase (gsy-1) (Neurospora crassa (strain ATCC 24698 / 74-OR23-1A / CBS 708.71 / DSM 1257 / FGSC 987)).